We begin with the raw amino-acid sequence, 301 residues long: ADP-ribosyl cyclase/cyclic ADP-ribose hydrolase 1 (301 aa).

At 1 to 21 the chain is on the cytoplasmic side; sequence MANCEFSPVSGDKPCCRLSRR. A helical; Signal-anchor for type II membrane protein membrane pass occupies residues 22 to 43; the sequence is AQVCLGVCLLVLLILVVVVAVV. Over 44 to 301 the chain is Extracellular; that stretch reads LPRWRQQWSG…PEDSSCLSGI (258 aa). Cystine bridges form between Cys68–Cys83, Cys100–Cys181, and Cys161–Cys174. An N-linked (GlcNAc...) asparagine glycan is attached at Asn101. Cys120 is an active-site residue. Asn121 carries N-linked (GlcNAc...) asparagine glycosylation. The active site involves Cys202. 2 N-linked (GlcNAc...) asparagine glycosylation sites follow: Asn210 and Asn220. Disulfide bonds link Cys255–Cys276 and Cys288–Cys297.

The protein belongs to the ADP-ribosyl cyclase family. In terms of assembly, homodimer.

The protein localises to the cell surface. The protein resides in the membrane. The catalysed reaction is NAD(+) = cyclic ADP-beta-D-ribose + nicotinamide + H(+). It carries out the reaction 2'-phospho-cyclic ADP-ribose + nicotinate = nicotinate-adenine dinucleotide phosphate. It catalyses the reaction NAD(+) + H2O = ADP-D-ribose + nicotinamide + H(+). The enzyme catalyses nicotinate + NADP(+) = nicotinate-adenine dinucleotide phosphate + nicotinamide. With respect to regulation, ATP inhibits the cADPR hydrolyzing activity. Functionally, synthesizes cyclic ADP-ribose (cADPR), a second messenger for glucose-induced insulin secretion. Synthesizes the Ca(2+) mobilizer nicotinate-adenine dinucleotide phosphate, NAADP(+), from 2'-phospho-cADPR and nicotinic acid, as well as from NADP(+) and nicotinic acid. Also has cADPR hydrolase activity. The polypeptide is ADP-ribosyl cyclase/cyclic ADP-ribose hydrolase 1 (CD38) (Macaca fascicularis (Crab-eating macaque)).